A 331-amino-acid chain; its full sequence is 2-hydroxyacid dehydrogenase homolog (331 aa).

Residues 154 to 155, 234 to 236, and Asp-260 contribute to the NAD(+) site; these read HI and TSR. Residue Arg-236 is part of the active site. Residue Glu-265 is part of the active site. Residue His-297 is the Proton donor of the active site. An NAD(+)-binding site is contributed by 297–300; it reads HQAF.

The protein belongs to the D-isomer specific 2-hydroxyacid dehydrogenase family.

The sequence is that of 2-hydroxyacid dehydrogenase homolog (ddh) from Zymomonas mobilis subsp. mobilis (strain ATCC 31821 / ZM4 / CP4).